Reading from the N-terminus, the 456-residue chain is Protein translocase subunit SecY (456 aa).

The Cytoplasmic portion of the chain corresponds to 1–21; it reads MEQLKEKFEPLFSVLPQVKSP. Residues 22–48 form a helical membrane-spanning segment; it reads GYRVPFREKLKWTGIILVLYFFLAQIP. At 49-59 the chain is on the extracellular side; sequence LYGLSANAVDQ. The segment at residues 60-67 is an intramembrane region (helical); that stretch reads FAQFRAVL. The discontinuously helical transmembrane segment at 60 to 88 threads the bilayer; sequence FAQFRAVLAGNFGSILTLGIGPIVSASII. The stretch at 68–79 is an intramembrane region; it reads AGNFGSILTLGI. The helical intramembrane region spans 80–88; sequence GPIVSASII. Residues 89–109 are Cytoplasmic-facing; that stretch reads LQLLVGGKILKLDLSRHEDKA. A helical transmembrane segment spans residues 110 to 134; the sequence is FFQGLQKLLAIVFTFFEALIFVLTG. The Extracellular portion of the chain corresponds to 135-141; sequence SLAPSAP. A helical transmembrane segment spans residues 142-166; the sequence is QFVWVLILQLTIGGILIIFLDEVVS. Residues 167–172 are Cytoplasmic-facing; it reads KWGFGS. Residues 173–191 form a helical membrane-spanning segment; sequence GVGLFIAAGVSQEIIVGAF. Topologically, residues 192–224 are extracellular; the sequence is NPLSAPTQPGVPAGRITGFLYLLFTGQSPDFQY. Residues 225 to 246 form a helical membrane-spanning segment; sequence YVLPVLALIAVFLVVVYAESMR. The Cytoplasmic portion of the chain corresponds to 247–275; that stretch reads VEIPISMGGGKRLSRGAVGKYPLRFIYAS. The helical transmembrane segment at 276–297 threads the bilayer; that stretch reads NMPVILTSALLLNVQLLANVFQ. Over 298 to 334 the chain is Extracellular; sequence KLGYPILGTVSNGQAVDGLAYLLTAPRSIDALILDPF. Residues 335–354 form a helical membrane-spanning segment; the sequence is RVVFYAVVFIGLCVLFAWLW. Topologically, residues 355 to 397 are cytoplasmic; that stretch reads VEISNIGPRHVARQLYQMGMQIPGFRSSRGQFEKILKRYIPTI. Residues 398-416 form a helical membrane-spanning segment; the sequence is TILGGAFVGLLAFVADLTG. Topologically, residues 417 to 419 are extracellular; sequence SLG. A helical membrane pass occupies residues 420 to 434; the sequence is GGTGVLLTVGIVYRL. Residues 435–456 are Cytoplasmic-facing; that stretch reads YEEIAQEQLMDMHPILRSFLGD.

Belongs to the SecY/SEC61-alpha family. Component of the Sec protein translocase complex. Heterotrimer consisting of alpha (SecY), beta (SecG) and gamma (SecE) subunits. The heterotrimers can form oligomers, although 1 heterotrimer is thought to be able to translocate proteins. Interacts with the ribosome. May interact with SecDF, and other proteins may be involved.

The protein localises to the cell membrane. The central subunit of the protein translocation channel SecYEG. Consists of two halves formed by TMs 1-5 and 6-10. These two domains form a lateral gate at the front which open onto the bilayer between TMs 2 and 7, and are clamped together by SecE at the back. The channel is closed by both a pore ring composed of hydrophobic SecY resides and a short helix (helix 2A) on the extracellular side of the membrane which forms a plug. The plug probably moves laterally to allow the channel to open. The ring and the pore may move independently. In Methanothermobacter thermautotrophicus (strain ATCC 29096 / DSM 1053 / JCM 10044 / NBRC 100330 / Delta H) (Methanobacterium thermoautotrophicum), this protein is Protein translocase subunit SecY.